The sequence spans 264 residues: tRNA (guanine-N(1)-)-methyltransferase (264 aa).

S-adenosyl-L-methionine-binding positions include glycine 133 and 152–157 (LGDFVM). A compositionally biased stretch (basic and acidic residues) spans 240–251 (QRRPDLWRKARG). The disordered stretch occupies residues 240 to 264 (QRRPDLWRKARGGEPPADESGEVRR). The span at 255–264 (PADESGEVRR) shows a compositional bias: acidic residues.

It belongs to the RNA methyltransferase TrmD family. As to quaternary structure, homodimer.

It localises to the cytoplasm. It carries out the reaction guanosine(37) in tRNA + S-adenosyl-L-methionine = N(1)-methylguanosine(37) in tRNA + S-adenosyl-L-homocysteine + H(+). Specifically methylates guanosine-37 in various tRNAs. The sequence is that of tRNA (guanine-N(1)-)-methyltransferase from Sorangium cellulosum (strain So ce56) (Polyangium cellulosum (strain So ce56)).